A 544-amino-acid chain; its full sequence is Potential vesicular glutamate transporter vglu-3 (544 aa).

Over 1–49 (MPNGSIRNCANAVADTVRQTFSRKTWEHKEQLQTITEQKKFFLRKVRWQ) the chain is Cytoplasmic. Residues 50–70 (IAILAHFGFAISFGIRSNFGV) form a helical membrane-spanning segment. The Extracellular segment spans residues 71-104 (AKNRMVNNFTDAYGEVHEREFLWTGAEVGMMESS). N78 is a glycosylation site (N-linked (GlcNAc...) asparagine). A helical membrane pass occupies residues 105 to 125 (FFYGYAASQIPAGVLAAKFAP). Residues 126–127 (NK) are Cytoplasmic-facing. Residues 128 to 148 (IFMLGILVASFMNILSAISFN) form a helical membrane-spanning segment. Residues 149–154 (FHPYTD) are Extracellular-facing. The chain crosses the membrane as a helical span at residues 155-175 (IFVMVVQAVQGLALGVLYPAM). Topologically, residues 176-193 (HGVWKFWAPPLERSKLAT) are cytoplasmic. The chain crosses the membrane as a helical span at residues 194–214 (TAFTGSSVGVMTGLPASAYLV). Topologically, residues 215–219 (SHFSW) are extracellular. The chain crosses the membrane as a helical span at residues 220–240 (STPFYVFGVVGIIWSLIWMYV). Over 241–285 (SSHSPETHGYISDDEKKQVTEKIGDVAVKNMSLTTLPWRDMMTSS) the chain is Cytoplasmic. The chain crosses the membrane as a helical span at residues 286 to 306 (AVWAIIICTFCRSWGFFLLLG). Topologically, residues 307-323 (NQLTYMKDVLHIDIKNS) are extracellular. The helical transmembrane segment at 324–344 (GFISIFPQFGMCIVTLATGQL) threads the bilayer. Residues 345 to 360 (CDYLRSSGKMSTEAVR) lie on the Cytoplasmic side of the membrane. A helical membrane pass occupies residues 361–381 (KSVNTFGFTVEAMMLGCLAFV). The Extracellular portion of the chain corresponds to 382 to 384 (RDP). A helical transmembrane segment spans residues 385 to 405 (VIAVTCLVIACTGSGSVLSGF). The Cytoplasmic portion of the chain corresponds to 406-416 (NVNHFDIAPRY). Residues 417–437 (APILMGIANGLGAVAGVGGMV) form a helical membrane-spanning segment. The Extracellular segment spans residues 438 to 450 (TNTVTYQNPDGWK). The helical transmembrane segment at 451–471 (WVFLLAMAIDIFGVIFFLIFA) threads the bilayer. Over 472–544 (KGDVLPWARE…APAEKSESSS (73 aa)) the chain is Cytoplasmic. A disordered region spans residues 501-544 (SLSRKTRNREGDTSYEKMEEDSEMKPCSKKVEARAPAEKSESSS). Over residues 508–544 (NREGDTSYEKMEEDSEMKPCSKKVEARAPAEKSESSS) the composition is skewed to basic and acidic residues.

Belongs to the major facilitator superfamily. Sodium/anion cotransporter family. VGLUT subfamily.

It localises to the membrane. The chain is Potential vesicular glutamate transporter vglu-3 (vglu-3) from Caenorhabditis elegans.